A 164-amino-acid polypeptide reads, in one-letter code: Peptidyl-prolyl cis-trans isomerase A (164 aa).

Methionine 1 is modified (N-acetylmethionine). Valine 2 carries the post-translational modification N-acetylvaline; in Peptidyl-prolyl cis-trans isomerase A, N-terminally processed. Residues 7–163 enclose the PPIase cyclophilin-type domain; it reads FFDIAVDGEP…KKITIADCGQ (157 aa). Lysine 28 is subject to N6-acetyllysine; alternate. A Glycyl lysine isopeptide (Lys-Gly) (interchain with G-Cter in SUMO2); alternate cross-link involves residue lysine 28. Residue lysine 28 forms a Glycyl lysine isopeptide (Lys-Gly) (interchain with G-Cter in ubiquitin); alternate linkage. Residues lysine 44 and lysine 76 each carry the N6-acetyllysine modification. Phosphoserine is present on serine 77. Lysine 82 carries the post-translational modification N6-acetyllysine; alternate. Lysine 82 is covalently cross-linked (Glycyl lysine isopeptide (Lys-Gly) (interchain with G-Cter in SUMO2); alternate). A Phosphothreonine modification is found at threonine 93. The N-linked (GlcNAc...) asparagine glycan is linked to asparagine 108. N6-acetyllysine occurs at positions 125, 131, and 133.

The protein belongs to the cyclophilin-type PPIase family. PPIase A subfamily. In terms of assembly, interacts with protein phosphatase PPP3CA/calcineurin A. Interacts with isoform 2 of BSG/CD147. Interacts with FOXO1; the interaction promotes FOXO1 dephosphorylation, nuclear accumulation and transcriptional activity. Interacts with integrin ITGA2B:ITGB3; the interaction is ROS and peptidyl-prolyl cis-trans isomerase (PPIase) activity-dependent and is increased in the presence of thrombin. Interacts with MAP3K5. Interacts with TARDBP; the interaction is dependent on the RNA-binding activity of TARDBP and the PPIase activity of PPIA/CYPA and the acetylation of PPIA/CYPA at Lys-125 favors the interaction. Interacts with HNRNPA1, HNRNPA2B1, HNRNPC, RBMX, HNRNPK and HNRNPM. Acetylation at Lys-125 markedly inhibits catalysis of cis to trans isomerization. PPIA acetylation also antagonizes the immunosuppressive effects of cyclosporine by inhibiting the sequential steps of cyclosporine binding and calcineurin inhibition. Acetylation at Lys-125 favors the interaction with TARDBP.

The protein localises to the cytoplasm. It localises to the secreted. The protein resides in the nucleus. It catalyses the reaction [protein]-peptidylproline (omega=180) = [protein]-peptidylproline (omega=0). With respect to regulation, binds cyclosporin A (CsA). CsA mediates some of its effects via an inhibitory action on PPIase. Its function is as follows. Catalyzes the cis-trans isomerization of proline imidic peptide bonds in oligopeptides. Exerts a strong chemotactic effect on leukocytes partly through activation of one of its membrane receptors BSG/CD147, initiating a signaling cascade that culminates in MAPK/ERK activation. Activates endothelial cells (ECs) in a proinflammatory manner by stimulating activation of NF-kappa-B and ERK, JNK and p38 MAP-kinases and by inducing expression of adhesion molecules including SELE and VCAM1. Induces apoptosis in ECs by promoting the FOXO1-dependent expression of CCL2 and BCL2L11 which are involved in EC chemotaxis and apoptosis. In response to oxidative stress, initiates proapoptotic and antiapoptotic signaling in ECs via activation of NF-kappa-B and AKT1 and up-regulation of antiapoptotic protein BCL2. Negatively regulates MAP3K5/ASK1 kinase activity, autophosphorylation and oxidative stress-induced apoptosis mediated by MAP3K5/ASK1. Necessary for the assembly of TARDBP in heterogeneous nuclear ribonucleoprotein (hnRNP) complexes and regulates TARDBP binding to RNA UG repeats and TARDBP-dependent expression of HDAC6, ATG7 and VCP which are involved in clearance of protein aggregates. Plays an important role in platelet activation and aggregation. Regulates calcium mobilization and integrin ITGA2B:ITGB3 bidirectional signaling via increased ROS production as well as by facilitating the interaction between integrin and the cell cytoskeleton. Binds heparan sulfate glycosaminoglycans. This chain is Peptidyl-prolyl cis-trans isomerase A (PPIA), found in Saguinus oedipus (Cotton-top tamarin).